The sequence spans 173 residues: Membrane-bound hydrogenase subunit beta (173 aa).

This sequence belongs to the complex I 30 kDa subunit family. The membrane-bound hydrogenase complex is composed of MbhK and MbhL, and may also contain MbhJ. Ni(2+) serves as cofactor.

Its subcellular location is the cell membrane. The enzyme catalyses H2 + 2 oxidized [2Fe-2S]-[ferredoxin] = 2 reduced [2Fe-2S]-[ferredoxin] + 2 H(+). With respect to regulation, inhibited by 0.1 mM Cu(2+). Beta subunit of a hydrogen-evolving hydrogenase that utilizes protons both as a substrate for hydrogen production and proton translocation. Acts by coupling the redox reaction via ferredoxin and iron-sulfur (Fe-S) clusters to proton translocation across the membrane thereby conserving the redox energy in a proton gradient. The sequence is that of Membrane-bound hydrogenase subunit beta from Pyrococcus furiosus (strain ATCC 43587 / DSM 3638 / JCM 8422 / Vc1).